The following is a 345-amino-acid chain: NADPH dehydrogenase (345 aa).

An FMN-binding site is contributed by 23-26 (SPMC). Y28 serves as a coordination point for substrate. FMN contacts are provided by A60 and Q102. 164–167 (HGAH) provides a ligand contact to substrate. FMN-binding positions include R215 and 307-308 (GR).

This sequence belongs to the NADH:flavin oxidoreductase/NADH oxidase family. NamA subfamily. In terms of assembly, homotetramer. It depends on FMN as a cofactor.

The enzyme catalyses A + NADPH + H(+) = AH2 + NADP(+). In terms of biological role, catalyzes the reduction of the double bond of an array of alpha,beta-unsaturated aldehydes and ketones. It also reduces the nitro group of nitroester and nitroaromatic compounds. It could have a role in detoxification processes. The protein is NADPH dehydrogenase of Bacillus cereus (strain AH820).